Reading from the N-terminus, the 384-residue chain is Lipid-A-disaccharide synthase (384 aa).

The protein belongs to the LpxB family.

It catalyses the reaction a lipid X + a UDP-2-N,3-O-bis[(3R)-3-hydroxyacyl]-alpha-D-glucosamine = a lipid A disaccharide + UDP + H(+). Its pathway is bacterial outer membrane biogenesis; LPS lipid A biosynthesis. Condensation of UDP-2,3-diacylglucosamine and 2,3-diacylglucosamine-1-phosphate to form lipid A disaccharide, a precursor of lipid A, a phosphorylated glycolipid that anchors the lipopolysaccharide to the outer membrane of the cell. The sequence is that of Lipid-A-disaccharide synthase from Cellvibrio japonicus (strain Ueda107) (Pseudomonas fluorescens subsp. cellulosa).